Here is an 863-residue protein sequence, read N- to C-terminus: Leucine--tRNA ligase (863 aa).

Positions 41–51 (PYPSGRIHIGH) match the 'HIGH' region motif. A 'KMSKS' region motif is present at residues 627-631 (KMSKS). Position 630 (Lys630) interacts with ATP.

This sequence belongs to the class-I aminoacyl-tRNA synthetase family.

The protein localises to the cytoplasm. The enzyme catalyses tRNA(Leu) + L-leucine + ATP = L-leucyl-tRNA(Leu) + AMP + diphosphate. The protein is Leucine--tRNA ligase of Jannaschia sp. (strain CCS1).